The primary structure comprises 741 residues: Ethylene receptor 2 (741 aa).

3 helical membrane passes run 23-43 (ISDFFIAIAYFSIPLELIYFV), 53-73 (WVLVQFGAFIVLCGATHLINL), and 92-112 (IMTAVVSCATALMLVHIIPDL). Positions 65 and 69 each coordinate Cu cation. The 150-residue stretch at 158-307 (DRHTILKTTL…VVADQVAVAL (150 aa)) folds into the GAF domain. In terms of domain architecture, Histidine kinase spans 350–589 (VMNHEMRTPM…TFVVKLGIPE (240 aa)). At His353 the chain carries Phosphohistidine; by autocatalysis. One can recognise a Response regulatory domain in the interval 615–732 (KVLLLDDNGV…KMRNVLSNLL (118 aa)). 4-aspartylphosphate is present on Asp663.

Belongs to the ethylene receptor family. In terms of assembly, homodimer; disulfide-linked. Requires Cu cation as cofactor. Activation probably requires a transfer of a phosphate group between a His in the transmitter domain and an Asp of the receiver domain.

The protein localises to the endoplasmic reticulum membrane. The enzyme catalyses ATP + protein L-histidine = ADP + protein N-phospho-L-histidine.. Its function is as follows. May act early in the ethylene signal transduction pathway, possibly as an ethylene receptor, or as a regulator of the pathway. The sequence is that of Ethylene receptor 2 (ETR2) from Pelargonium hortorum (Common geranium).